The primary structure comprises 176 residues: MDAAFVITPMGVLTITDTLYDDLDISIMDFIGPYIIGNIKTVQIDVRDIKYSDMQKCYFSYKGKIVPQDSNDLARFNIYSICAAYRSKNTIIIACDYDIMLDIEDKHQPFYLFPSIDVFNATIIEAYNLYTAGDYHLIINPSDNLKMKLSFNSSFCISDGNGWIIIDGKCNSNFLS.

Positions 1–14 (MDAAFVITPMGVLT) are cleaved as a signal peptide.

The protein belongs to the orthopoxvirus OPG163 family.

The protein localises to the host endosome. Functionally, mildly affects the expression of MHC class II molecules on the surface of host antigen presenting cells (APCs). This is Protein OPG163 (OPG163) from Homo sapiens (Human).